The chain runs to 1051 residues: Exportin-T (1051 aa).

It belongs to the exportin family.

The protein localises to the nucleus. The protein resides in the cytoplasm. Its function is as follows. tRNA nucleus export receptor which facilitates tRNA translocation across the nuclear pore complex. Involved in pre-tRNA splicing, probably by affecting the interaction of pre-tRNA with splicing endonuclease. The protein is Exportin-T (LOS1) of Eremothecium gossypii (strain ATCC 10895 / CBS 109.51 / FGSC 9923 / NRRL Y-1056) (Yeast).